The sequence spans 101 residues: Small ribosomal subunit protein uS14 (101 aa).

The protein belongs to the universal ribosomal protein uS14 family. As to quaternary structure, part of the 30S ribosomal subunit. Contacts proteins S3 and S10.

Functionally, binds 16S rRNA, required for the assembly of 30S particles and may also be responsible for determining the conformation of the 16S rRNA at the A site. This is Small ribosomal subunit protein uS14 from Bordetella petrii (strain ATCC BAA-461 / DSM 12804 / CCUG 43448).